Consider the following 1272-residue polypeptide: Protein diaphanous homolog 1 (1272 aa).

Methionine 1 is subject to N-acetylmethionine. A compositionally biased stretch (gly residues) spans 1 to 12 (MEPPGGSLGPGR). Positions 1–84 (MEPPGGSLGP…YGDDPTAQSL (84 aa)) are disordered. 3 positions are modified to phosphoserine: serine 7, serine 22, and serine 36. A compositionally biased stretch (basic and acidic residues) spans 44–65 (LMADELERFTSMRIKKEKEKPN). Residues 67–84 (AHRNSSASYGDDPTAQSL) show a composition bias toward polar residues. The GBD/FH3 domain maps to 84 to 449 (LQDVSDEQVL…QIVLHKNGAD (366 aa)). Residues 468–572 (MIDKTKVEKS…ASLSAAAITV (105 aa)) are a coiled coil. The disordered stretch occupies residues 573-755 (PPSVPSRAPV…GMPPPPPFGF (183 aa)). Pro residues-rich tracts occupy residues 574-589 (PSVPSRAPVPPAPPLP), 596-622 (IPPPPAPGDSTTPPPPPPPPPPPPPLP), and 640-658 (SPPPPLSGDATIPPPPPLP). Residues 583-764 (PPAPPLPGDS…FGVPAAPVLP (182 aa)) enclose the FH1 domain. A compositionally biased stretch (low complexity) spans 659-674 (EGVGIPSPSSLPGGTA). Over residues 675-753 (IPPPPPLPGS…GMGMPPPPPF (79 aa)) the composition is skewed to pro residues. Threonine 768 carries the phosphothreonine modification. The 403-residue stretch at 769–1171 (PKKLYKPEVQ…MRRAKLAKEK (403 aa)) folds into the FH2 domain. Residues 1039 to 1196 (DELAHVEKAS…IDMNAEGDET (158 aa)) adopt a coiled-coil conformation. An N6-acetyllysine mark is found at lysine 1057 and lysine 1103. Position 1121 is a phosphotyrosine (tyrosine 1121). The DAD domain maps to 1194–1222 (DETGVMDSLLEALQSGAAFRRKRGPRQAN). 2 positions are modified to phosphoserine: serine 1251 and serine 1254.

The protein belongs to the formin homology family. Diaphanous subfamily. As to quaternary structure, homodimer. Interacts with the GTP-bound form of RHOA. Interacts with RHOC, PFY1, MAPRE1 and BAIAP2. Interacts with APC; acts as a scaffold protein for MAPRE1 and APC to stabilize microtubules and promote cell migration. Interacts with SCAI. Interacts with DCAF7, via FH2 domain. Interacts with NCDN. Interacts with OSBPL10, OSBPL2, VIM, TUBB and DYN1. Post-translationally, phosphorylation at Thr-768 is stimulated by cAMP and regulates stability, complex formation and mitochondrial movement. As to expression, expressed in brain, heart, placenta, lung, kidney, pancreas, liver, skeletal muscle and cochlea. Expressed in platelets.

The protein resides in the cell membrane. Its subcellular location is the cell projection. It is found in the ruffle membrane. The protein localises to the cytoplasm. It localises to the cytoskeleton. The protein resides in the microtubule organizing center. Its subcellular location is the centrosome. It is found in the spindle. The protein localises to the nucleus. Its function is as follows. Actin nucleation and elongation factor required for the assembly of F-actin structures, such as actin cables and stress fibers. Binds to the barbed end of the actin filament and slows down actin polymerization and depolymerization. Required for cytokinesis, and transcriptional activation of the serum response factor. DFR proteins couple Rho and Src tyrosine kinase during signaling and the regulation of actin dynamics. Functions as a scaffold protein for MAPRE1 and APC to stabilize microtubules and promote cell migration. Has neurite outgrowth promoting activity. Acts in a Rho-dependent manner to recruit PFY1 to the membrane. In hear cells, it may play a role in the regulation of actin polymerization in hair cells. The MEMO1-RHOA-DIAPH1 signaling pathway plays an important role in ERBB2-dependent stabilization of microtubules at the cell cortex. It controls the localization of APC and CLASP2 to the cell membrane, via the regulation of GSK3B activity. In turn, membrane-bound APC allows the localization of the MACF1 to the cell membrane, which is required for microtubule capture and stabilization. Plays a role in the regulation of cell morphology and cytoskeletal organization. Required in the control of cell shape. Plays a role in brain development. Also acts as an actin nucleation and elongation factor in the nucleus by promoting nuclear actin polymerization inside the nucleus to drive serum-dependent SRF-MRTFA activity. This chain is Protein diaphanous homolog 1 (DIAPH1), found in Homo sapiens (Human).